We begin with the raw amino-acid sequence, 425 residues long: GTPase Obg (425 aa).

In terms of domain architecture, Obg spans 1–158 (MFVDVARIYV…RWLLLELKVV (158 aa)). Residues 159–330 (ADVGLVGFPN…LLEAAYDLIR (172 aa)) form the OBG-type G domain. GTP contacts are provided by residues 165 to 172 (GFPNAGKS), 190 to 194 (FTTLT), 212 to 215 (DIPG), 282 to 285 (NKMD), and 311 to 313 (SGA). Mg(2+)-binding residues include serine 172 and threonine 192. Residues 345 to 422 (VYRPKEEGWR…VCDIEFELMA (78 aa)) enclose the OCT domain.

The protein belongs to the TRAFAC class OBG-HflX-like GTPase superfamily. OBG GTPase family. In terms of assembly, monomer. Mg(2+) is required as a cofactor.

The protein resides in the cytoplasm. Its function is as follows. An essential GTPase which binds GTP, GDP and possibly (p)ppGpp with moderate affinity, with high nucleotide exchange rates and a fairly low GTP hydrolysis rate. Plays a role in control of the cell cycle, stress response, ribosome biogenesis and in those bacteria that undergo differentiation, in morphogenesis control. This is GTPase Obg from Symbiobacterium thermophilum (strain DSM 24528 / JCM 14929 / IAM 14863 / T).